The chain runs to 141 residues: Large ribosomal subunit protein uL11 (141 aa).

The protein belongs to the universal ribosomal protein uL11 family. As to quaternary structure, part of the ribosomal stalk of the 50S ribosomal subunit. Interacts with L10 and the large rRNA to form the base of the stalk. L10 forms an elongated spine to which L12 dimers bind in a sequential fashion forming a multimeric L10(L12)X complex. One or more lysine residues are methylated.

Forms part of the ribosomal stalk which helps the ribosome interact with GTP-bound translation factors. This is Large ribosomal subunit protein uL11 from Geobacter sulfurreducens (strain ATCC 51573 / DSM 12127 / PCA).